A 572-amino-acid polypeptide reads, in one-letter code: Phospholipase B-like protein B (572 aa).

The first 28 residues, 1–28 (MNKLKSNFILNIVILFTILIFNINFINC), serve as a signal peptide directing secretion. Asn-73, Asn-138, Asn-219, Asn-427, Asn-544, and Asn-564 each carry an N-linked (GlcNAc...) asparagine glycan.

This sequence belongs to the phospholipase B-like family.

It localises to the secreted. Probable phospholipase. In Dictyostelium discoideum (Social amoeba), this protein is Phospholipase B-like protein B (plbB).